A 100-amino-acid chain; its full sequence is Large ribosomal subunit protein uL23 (100 aa).

Belongs to the universal ribosomal protein uL23 family. As to quaternary structure, part of the 50S ribosomal subunit. Contacts protein L29, and trigger factor when it is bound to the ribosome.

Functionally, one of the early assembly proteins it binds 23S rRNA. One of the proteins that surrounds the polypeptide exit tunnel on the outside of the ribosome. Forms the main docking site for trigger factor binding to the ribosome. This is Large ribosomal subunit protein uL23 from Novosphingobium aromaticivorans (strain ATCC 700278 / DSM 12444 / CCUG 56034 / CIP 105152 / NBRC 16084 / F199).